The sequence spans 491 residues: MDIRGINTPFLDWTGDALALGIFEEGTQITGELSQLDGKLTGTVQELIQEAEFEGKAGTKAVTRVGSNSPIRKVMLVGLGKAEDLQLNSVREAAGAIARLAKLEKVKTLGINLPVVNNDGAKTASAIAEGILLALHQDNRFKSDPQENALKLENVDILGCGEATEAINRAQTLSSGVILARELVNSPANTITPVTFAETAQEIAQTSGLTCEILEQEDCEKLGMGSFLGVAKASDLPPKFIHLTYKPSGTPKKKLAIVGKSLTFDCGGLNLKVAGASIEMMKMDMGGGAATLGAAKVIGQLKPDVEVHFICAATENMISGRAIHPGDILTASNGKTIEVNNTDAEGRLTLADALVFAEKLEVDAIVDLATLTGACIIALGDNISGLWSTDQTLADQLKAAAETAGEKFWQMPLEEKYFEGLKSPIADMKNTGPRAGGSITAALFLKQFIKDTPWAHLDIAGPVWAEKENGLNNVGGTGFPVRTLVNWVLSF.

Residues K260 and D265 each contribute to the Mn(2+) site. K272 is a catalytic residue. Mn(2+) contacts are provided by D284, D343, and E345. The active site involves R347.

Belongs to the peptidase M17 family. It depends on Mn(2+) as a cofactor.

The protein resides in the cytoplasm. It carries out the reaction Release of an N-terminal amino acid, Xaa-|-Yaa-, in which Xaa is preferably Leu, but may be other amino acids including Pro although not Arg or Lys, and Yaa may be Pro. Amino acid amides and methyl esters are also readily hydrolyzed, but rates on arylamides are exceedingly low.. The enzyme catalyses Release of an N-terminal amino acid, preferentially leucine, but not glutamic or aspartic acids.. Presumably involved in the processing and regular turnover of intracellular proteins. Catalyzes the removal of unsubstituted N-terminal amino acids from various peptides. This is Probable cytosol aminopeptidase from Rippkaea orientalis (strain PCC 8801 / RF-1) (Cyanothece sp. (strain PCC 8801)).